A 293-amino-acid polypeptide reads, in one-letter code: Glutamyl-Q tRNA(Asp) synthetase (293 aa).

Residues 26-30 and Asp62 each bind L-glutamate; that span reads RYAPS. Residues 29–39 carry the 'HIGH' region motif; it reads PSPTGALHLGN. Zn(2+) contacts are provided by Cys118, Cys120, Tyr131, and Cys135. L-glutamate contacts are provided by Tyr178 and Arg196. A 'KMSKS' region motif is present at residues 234–238; it reads KLSKR. Lys237 lines the ATP pocket.

This sequence belongs to the class-I aminoacyl-tRNA synthetase family. GluQ subfamily. Zn(2+) serves as cofactor.

Catalyzes the tRNA-independent activation of glutamate in presence of ATP and the subsequent transfer of glutamate onto a tRNA(Asp). Glutamate is transferred on the 2-amino-5-(4,5-dihydroxy-2-cyclopenten-1-yl) moiety of the queuosine in the wobble position of the QUC anticodon. The protein is Glutamyl-Q tRNA(Asp) synthetase of Parasynechococcus marenigrum (strain WH8102).